Reading from the N-terminus, the 327-residue chain is Small ribosomal subunit protein uS2 (327 aa).

A disordered region spans residues 258–327; sequence AGHTPVSETL…PGVADGAALE (70 aa).

Belongs to the universal ribosomal protein uS2 family.

The polypeptide is Small ribosomal subunit protein uS2 (Anaplasma marginale (strain St. Maries)).